The sequence spans 316 residues: Ribonuclease Z (316 aa).

Positions 59, 61, 63, 64, 135, 203, and 261 each coordinate Zn(2+). The Proton acceptor role is filled by aspartate 63.

This sequence belongs to the RNase Z family. In terms of assembly, homodimer. Zn(2+) is required as a cofactor.

The enzyme catalyses Endonucleolytic cleavage of RNA, removing extra 3' nucleotides from tRNA precursor, generating 3' termini of tRNAs. A 3'-hydroxy group is left at the tRNA terminus and a 5'-phosphoryl group is left at the trailer molecule.. Zinc phosphodiesterase, which displays some tRNA 3'-processing endonuclease activity. Probably involved in tRNA maturation, by removing a 3'-trailer from precursor tRNA. The protein is Ribonuclease Z of Nanoarchaeum equitans (strain Kin4-M).